The following is an 862-amino-acid chain: DNA mismatch repair protein MutS (862 aa).

618–625 lines the ATP pocket; sequence GPNMGGKS. The tract at residues 799 to 824 is disordered; that stretch reads QLESRDNQASPAVASAPQQQSLSLSP. Residues 806-824 show a composition bias toward low complexity; the sequence is QASPAVASAPQQQSLSLSP.

This sequence belongs to the DNA mismatch repair MutS family.

This protein is involved in the repair of mismatches in DNA. It is possible that it carries out the mismatch recognition step. This protein has a weak ATPase activity. The polypeptide is DNA mismatch repair protein MutS (Shewanella denitrificans (strain OS217 / ATCC BAA-1090 / DSM 15013)).